A 529-amino-acid polypeptide reads, in one-letter code: NADPH-dependent thioredoxin reductase 3 (529 aa).

Residues 1-67 (MAASPKIGIG…SSDSLRLRVS (67 aa)) constitute a chloroplast transit peptide. The interval 54-78 (TRTRSSDSLRLRVSATANSPSSSSS) is disordered. The segment covering 64-78 (LRVSATANSPSSSSS) has biased composition (low complexity). FAD is bound by residues 91–94 (SGPA), 113–120 (EGYQMGGV), Asn133, Val166, and Cys220. An intrachain disulfide couples Cys217 to Cys220. NADP(+)-binding residues include Thr240, Arg265, Ile324, and Tyr344. FAD contacts are provided by residues Asp364 and 371–374 (RQAV). Arg371 is a binding site for NADP(+). The region spanning 403–529 (PQTEEAKKEF…EYREFIEANK (127 aa)) is the Thioredoxin domain. Catalysis depends on nucleophile residues Cys454 and Cys457. Cys454 and Cys457 are oxidised to a cystine.

Belongs to the class-II pyridine nucleotide-disulfide oxidoreductase family. In terms of assembly, may homodimerize. Interacts with the 2-Cys peroxiredoxin BAS1. The cofactor is FAD.

It is found in the plastid. The protein resides in the chloroplast. It catalyses the reaction [thioredoxin]-dithiol + NADP(+) = [thioredoxin]-disulfide + NADPH + H(+). In terms of biological role, thioredoxin reductase (TR) that exhibits both TR and thioredoxin (Trx) activities. Contains a C-terminal functional Trx domain. Functions as an electron donor for plastidial 2-Cys peroxiredoxins and participates in a NADPH-dependent hydrogen peroxide scavenging system in chloroplasts in the dark. Required for chlorophyll biosynthesis and biogenesis of the photosynthetic apparatus. Activates aerobic cyclase which converts Mg-protoporhyrin monomethyl ester into protochlorophyllide. Involved in a light-dependent regulation of starch biosynthesis by redox activation of the ADP-glucose pyrophosphorylase (AGPase), a central enzyme of starch synthesis. In Arabidopsis thaliana (Mouse-ear cress), this protein is NADPH-dependent thioredoxin reductase 3.